The following is a 268-amino-acid chain: GTP cyclohydrolase FolE2 (268 aa).

It belongs to the GTP cyclohydrolase IV family.

It catalyses the reaction GTP + H2O = 7,8-dihydroneopterin 3'-triphosphate + formate + H(+). It participates in cofactor biosynthesis; 7,8-dihydroneopterin triphosphate biosynthesis; 7,8-dihydroneopterin triphosphate from GTP: step 1/1. Functionally, converts GTP to 7,8-dihydroneopterin triphosphate. This Janthinobacterium sp. (strain Marseille) (Minibacterium massiliensis) protein is GTP cyclohydrolase FolE2.